We begin with the raw amino-acid sequence, 89 residues long: Small ribosomal subunit protein uS15 (89 aa).

It belongs to the universal ribosomal protein uS15 family. In terms of assembly, part of the 30S ribosomal subunit. Forms a bridge to the 50S subunit in the 70S ribosome, contacting the 23S rRNA.

Functionally, one of the primary rRNA binding proteins, it binds directly to 16S rRNA where it helps nucleate assembly of the platform of the 30S subunit by binding and bridging several RNA helices of the 16S rRNA. In terms of biological role, forms an intersubunit bridge (bridge B4) with the 23S rRNA of the 50S subunit in the ribosome. The protein is Small ribosomal subunit protein uS15 of Methylorubrum extorquens (strain CM4 / NCIMB 13688) (Methylobacterium extorquens).